The chain runs to 166 residues: Putative 4-hydroxy-4-methyl-2-oxoglutarate aldolase (166 aa).

Residues Gly-74–Ile-77 and Arg-96 contribute to the substrate site. Position 97 (Asp-97) interacts with a divalent metal cation.

It belongs to the class II aldolase/RraA-like family. Homotrimer. It depends on a divalent metal cation as a cofactor.

It carries out the reaction 4-hydroxy-4-methyl-2-oxoglutarate = 2 pyruvate. It catalyses the reaction oxaloacetate + H(+) = pyruvate + CO2. Its function is as follows. Catalyzes the aldol cleavage of 4-hydroxy-4-methyl-2-oxoglutarate (HMG) into 2 molecules of pyruvate. Also contains a secondary oxaloacetate (OAA) decarboxylase activity due to the common pyruvate enolate transition state formed following C-C bond cleavage in the retro-aldol and decarboxylation reactions. This chain is Putative 4-hydroxy-4-methyl-2-oxoglutarate aldolase, found in Xanthomonas campestris pv. campestris (strain B100).